A 141-amino-acid chain; its full sequence is uncharacterized protein (141 aa).

The next 4 membrane-spanning stretches (helical) occupy residues 7–24 (YRIP…FLSP), 39–56 (FLKF…HRGI), 69–91 (FYLI…ILGF), and 116–138 (FFIL…SSFI).

The protein resides in the cell membrane. This is an uncharacterized protein from Aquifex aeolicus (strain VF5).